Reading from the N-terminus, the 456-residue chain is MKKKTWFLNFSLFFLQIFTSSNALDVTQFGAVGDGVTDDSQAFLKAWEAVCSGTGDGQFVVPAGMTFMLQPLKFQGSCKSTPVFVQMLGKLVAPSKGNWKGDKDQWILFTDIEGLVIEGDGEINGQGSSWWEHKGSRPTALKFRSCNNLRLSGLTHLDSPMAHIHISECNYVTISSLRINAPESSPNTDGIDVGASSNVVIQDCIIATGDDCIAINSGTSNIHISGIDCGPGHGISIGSLGKDGETATVENVCVQNCNFRGTMNGARIKTWQGGSGYARMITFNGITLDNVENPIIIDQFYNGGDSDNAKDRKSSAVEVSKVVFSNFIGTSKSEYGVDFRCSERVPCTEIFLRDMKIETASSGSGQVAQGQCLNVRGASTIAVPGLECLELSTDMFSSAQLLEQTCMSAQSVQPRTTTQPMQDPIWVFQSRGKQLRVYNIAILVSFISLVTYILAR.

Residues 1-23 (MKKKTWFLNFSLFFLQIFTSSNA) form the signal peptide. 6 PbH1 repeats span residues 169-195 (CNYV…DVGA), 196-217 (SSNV…AINS), 219-239 (TSNI…SIGS), 249-270 (VENV…RIKT), 278-299 (ARMI…IIDQ), and 314-341 (SSAV…DFRC). The Proton donor role is filled by Asp210. His233 is an active-site residue.

It belongs to the glycosyl hydrolase 28 family.

The protein localises to the secreted. It is found in the cell wall. The catalysed reaction is (1,4-alpha-D-galacturonosyl)n+m + H2O = (1,4-alpha-D-galacturonosyl)n + (1,4-alpha-D-galacturonosyl)m.. This is Probable polygalacturonase At3g15720 from Arabidopsis thaliana (Mouse-ear cress).